Here is a 60-residue protein sequence, read N- to C-terminus: UPF0434 protein SG0997 (60 aa).

Belongs to the UPF0434 family.

This chain is UPF0434 protein SG0997, found in Sodalis glossinidius (strain morsitans).